The primary structure comprises 967 residues: Disks large homolog 1 (967 aa).

Positions 5-65 (SSEKAHKAIE…LYEQTLLSER (61 aa)) constitute an L27 domain. The 88-residue stretch at 202–289 (NIVLEKGHTG…VVSLSLKRRK (88 aa)) folds into the PDZ 1 domain. Residues 324–351 (IHSPSAPIHPPPPPPVHHGSLSQLSVGQ) are disordered. Pro residues predominate over residues 330–339 (PIHPPPPPPV). PDZ domains are found at residues 361 to 448 (VIDL…QQGT) and 510 to 591 (PVQL…QYRP). The region spanning 619–690 (RKSEYVRALF…PSKKRVEKRE (72 aa)) is the SH3 domain. Residues 673-723 (EETAEGVIPSKKRVEKRERLRRKQVNFNSGSQSLGRNSSTTGLENRRGSRS) are disordered. The span at 682–696 (SKKRVEKRERLRRKQ) shows a compositional bias: basic residues. Polar residues predominate over residues 697–715 (VNFNSGSQSLGRNSSTTGL). The Guanylate kinase-like domain occupies 769–955 (VRPVIILGAL…VLSKVYSIIS (187 aa)).

The protein belongs to the MAGUK family. Homooligomerizes; requires L27 domain. Interacts (via L27 domain) with ajm-1; the interaction regulates ajm-1 apical junction location. In terms of tissue distribution, expressed in the apical junctions in the hypodermis. Expressed in epithelial cells in the reproductive system including vulva, uterus and spermatheca.

It is found in the membrane. The protein localises to the apical cell membrane. It localises to the cell junction. The protein resides in the adherens junction. Its subcellular location is the lateral cell membrane. It is found in the cytoplasm. In terms of biological role, essential multidomain scaffolding protein required for normal development. Recruits channels, receptors and signaling molecules to discrete plasma membrane domains in polarized cells. Required for proper embryonic elongation. Acts upstream of ajm-1 and becomes localized to apical junctions independently of ajm-1. With let-413, cooperatively regulates ajm-1 localization to apical junctions and the establishment of newly formed epithelia. Plays a role in assembling the adherens junction by clustering ajm-1 and other proteins, to form electron-dense structures; may form a compartment distinct to that of hmp-1 and associated proteins. Plays a role in the directed outgrowth of seam cells, towards neighboring seam cells, during larval development. The chain is Disks large homolog 1 from Caenorhabditis elegans.